A 301-amino-acid chain; its full sequence is Coiled-coil domain-containing protein 50 (301 aa).

A coiled-coil region spans residues 57–131 (QVAKQLQEEE…LQEEKKRKKH (75 aa)). Composition is skewed to basic and acidic residues over residues 123–142 (QEEK…KVYE), 161–175 (VYDK…SDAE), and 214–262 (AFKK…DKSS). Disordered regions lie at residues 123 to 175 (QEEK…SDAE) and 214 to 301 (AFKK…RRKQ).

Phosphorylated on tyrosine residues.

Functionally, involved in EGFR signaling. The chain is Coiled-coil domain-containing protein 50 (CCDC50) from Gallus gallus (Chicken).